Consider the following 335-residue polypeptide: Zinc transporter ZIP11 (335 aa).

A run of 7 helical transmembrane segments spans residues 12 to 32 (LLGT…VFIF), 44 to 64 (LGFA…APAV), 72 to 92 (GFGA…AAFV), 187 to 207 (IALL…AVGV), 256 to 278 (FWYG…FAVV), 283 to 300 (VLPY…YVVM), and 315 to 335 (LASW…VGLG).

It belongs to the ZIP transporter (TC 2.A.5) family.

It localises to the cell membrane. Its subcellular location is the nucleus. The protein localises to the cytoplasm. The protein resides in the golgi apparatus. It catalyses the reaction Zn(2+)(in) = Zn(2+)(out). It carries out the reaction Cu(2+)(in) = Cu(2+)(out). Functionally, zinc importer that regulates cytosolic zinc concentrations either via zinc influx from the extracellular compartment or efflux from intracellular organelles such as Golgi apparatus. May transport copper ions as well. The transport mechanism remains to be elucidated. The chain is Zinc transporter ZIP11 (Slc39a11) from Rattus norvegicus (Rat).